The following is a 147-amino-acid chain: Plasminogen receptor (KT) (147 aa).

Topologically, residues 1-52 (MGFIFSKSMNENMKNQQEFMVTHARLQLERHLTMQNEMRERQMAMQIAWSRE) are extracellular. A helical transmembrane segment spans residues 53 to 73 (FLKYFGTFFGIATISLATGAL). Residues 74-78 (KRKKP) are Cytoplasmic-facing. The helical transmembrane segment at 79–99 (AFLVPIVPLSFIFTYQYDLGY) threads the bilayer. The Extracellular portion of the chain corresponds to 100-147 (GTLLQRMKSEAEDILETEKTKLELPKGLITFESLEKARREQSKLFSDK).

In terms of assembly, interacts with PLAT. Interacts with PLAUR. As to expression, expressed in monocytes; detected in differentiated monocytes but not in progenitor cells. Expressed in adrenal medulla and hippocampus.

The protein resides in the cell membrane. Receptor for plasminogen. Regulates urokinase plasminogen activator-dependent and stimulates tissue-type plasminogen activator-dependent cell surface plasminogen activation. Proposed to be part of a local catecholaminergic cell plasminogen activation system that regulates neuroendocrine prohormone processing. Involved in regulation of inflammatory response; regulates monocyte chemotactic migration and matrix metalloproteinase activation, such as of MMP2 and MMP9. In Mus musculus (Mouse), this protein is Plasminogen receptor (KT) (Plgrkt).